The following is a 338-amino-acid chain: NADPH dehydrogenase (338 aa).

22 to 25 (SPMC) contacts FMN. Tyrosine 27 serves as a coordination point for substrate. Residues alanine 59 and glutamine 101 each coordinate FMN. 163–166 (HAAH) is a binding site for substrate. FMN contacts are provided by residues arginine 214 and 306 to 307 (GR).

It belongs to the NADH:flavin oxidoreductase/NADH oxidase family. NamA subfamily. Homotetramer. FMN serves as cofactor.

It carries out the reaction A + NADPH + H(+) = AH2 + NADP(+). Its function is as follows. Catalyzes the reduction of the double bond of an array of alpha,beta-unsaturated aldehydes and ketones. It also reduces the nitro group of nitroester and nitroaromatic compounds. It could have a role in detoxification processes. The polypeptide is NADPH dehydrogenase (Listeria innocua serovar 6a (strain ATCC BAA-680 / CLIP 11262)).